The sequence spans 373 residues: Queuine tRNA-ribosyltransferase accessory subunit 2 (373 aa).

Positions 320, 322, 325, and 351 each coordinate Zn(2+).

The protein belongs to the queuine tRNA-ribosyltransferase family. QTRT2 subfamily. As to quaternary structure, heterodimer of a catalytic subunit and an accessory subunit. Requires Zn(2+) as cofactor.

The protein localises to the cytoplasm. In terms of biological role, non-catalytic subunit of the queuine tRNA-ribosyltransferase (TGT) that catalyzes the base-exchange of a guanine (G) residue with queuine (Q) at position 34 (anticodon wobble position) in tRNAs with GU(N) anticodons (tRNA-Asp, -Asn, -His and -Tyr), resulting in the hypermodified nucleoside queuosine (7-(((4,5-cis-dihydroxy-2-cyclopenten-1-yl)amino)methyl)-7-deazaguanosine). The chain is Queuine tRNA-ribosyltransferase accessory subunit 2 from Caenorhabditis elegans.